The primary structure comprises 182 residues: Lipid A acyltransferase PagP (182 aa).

Positions 1–21 are cleaved as a signal peptide; the sequence is MTQYFRALAFFLLLVPATAMA. Cysteine 22 is lipidated: N-palmitoyl cysteine. Cysteine 22 carries the S-diacylglycerol cysteine lipid modification. Catalysis depends on residues histidine 55, aspartate 98, and serine 99.

This sequence belongs to the lipid A palmitoyltransferase family. As to quaternary structure, homodimer.

The protein localises to the cell outer membrane. The enzyme catalyses a lipid A + a 1,2-diacyl-sn-glycero-3-phosphocholine = a hepta-acyl lipid A + a 2-acyl-sn-glycero-3-phosphocholine. It catalyses the reaction a lipid IVA + a 1,2-diacyl-sn-glycero-3-phosphocholine = a lipid IVB + a 2-acyl-sn-glycero-3-phosphocholine. The catalysed reaction is a lipid IIA + a 1,2-diacyl-sn-glycero-3-phosphocholine = a lipid IIB + a 2-acyl-sn-glycero-3-phosphocholine. Its function is as follows. Transfers a fatty acid residue from the sn-1 position of a phospholipid to the N-linked hydroxyfatty acid chain on the proximal unit of lipid A or its precursors. The sequence is that of Lipid A acyltransferase PagP from Bordetella parapertussis (strain 12822 / ATCC BAA-587 / NCTC 13253).